Here is a 309-residue protein sequence, read N- to C-terminus: Porphobilinogen deaminase (309 aa).

Position 240 is an S-(dipyrrolylmethanemethyl)cysteine (Cys-240).

This sequence belongs to the HMBS family. As to quaternary structure, monomer. Dipyrromethane is required as a cofactor.

It catalyses the reaction 4 porphobilinogen + H2O = hydroxymethylbilane + 4 NH4(+). It functions in the pathway porphyrin-containing compound metabolism; protoporphyrin-IX biosynthesis; coproporphyrinogen-III from 5-aminolevulinate: step 2/4. In terms of biological role, tetrapolymerization of the monopyrrole PBG into the hydroxymethylbilane pre-uroporphyrinogen in several discrete steps. In Chromobacterium violaceum (strain ATCC 12472 / DSM 30191 / JCM 1249 / CCUG 213 / NBRC 12614 / NCIMB 9131 / NCTC 9757 / MK), this protein is Porphobilinogen deaminase.